Here is a 117-residue protein sequence, read N- to C-terminus: Transcription elongation factor SPT4 (117 aa).

The residue at position 2 (Ala2) is an N-acetylalanine. Positions 2 to 40 are interaction with SUPT5H; sequence ALETVPKDLRHLRACLLCSLVKTIDQFEYDGCDNCDAYL. Zn(2+) is bound by residues Cys16, Cys19, Cys33, and Cys36. The C4-type zinc-finger motif lies at 16 to 36; it reads CLLCSLVKTIDQFEYDGCDNC.

Belongs to the SPT4 family. As to quaternary structure, interacts with SUPT5H to form DSIF. DSIF interacts with the positive transcription elongation factor b complex (P-TEFb complex), which is composed of CDK9 and cyclin-T (CCNT1 or CCNT2). DSIF interacts with RNA polymerase II, and this interaction is reduced by phosphorylation of the C-terminal domain (CTD) of POLR2A by P-TEFb. DSIF also interacts with the NELF complex, which is composed of NELFA, NELFB, NELFD and NELFE, and this interaction occurs following prior binding of DSIF to RNA polymerase II. DSIF also interacts with PRMT1/HRMT1L2, TATSF1, RNGTT/CAP1A, PRMT5/SKB1, SUPT6H, and can interact with PIN1. In terms of processing, ubiquitinated by UBR5 when not assembled in the DSIF complex, leading to its degradation: UBR5 recognizes and binds a degron that is not accessible when SUPT4H1 is part of the DSIF complex.

It localises to the nucleus. Component of the DRB sensitivity-inducing factor complex (DSIF complex), which regulates mRNA processing and transcription elongation by RNA polymerase II. DSIF positively regulates mRNA capping by stimulating the mRNA guanylyltransferase activity of RNGTT/CAP1A. DSIF also acts cooperatively with the negative elongation factor complex (NELF complex) to enhance transcriptional pausing at sites proximal to the promoter. Transcriptional pausing may facilitate the assembly of an elongation competent RNA polymerase II complex. DSIF and NELF promote pausing by inhibition of the transcription elongation factor TFIIS/S-II. TFIIS/S-II binds to RNA polymerase II at transcription pause sites and stimulates the weak intrinsic nuclease activity of the enzyme. Cleavage of blocked transcripts by RNA polymerase II promotes the resumption of transcription from the new 3' terminus and may allow repeated attempts at transcription through natural pause sites. This is Transcription elongation factor SPT4 (SUPT4H1) from Pongo abelii (Sumatran orangutan).